The following is a 134-amino-acid chain: Translation initiation factor 2 subunit beta (134 aa).

Belongs to the eIF-2-beta/eIF-5 family. As to quaternary structure, heterotrimer composed of an alpha, a beta and a gamma chain.

In terms of biological role, eIF-2 functions in the early steps of protein synthesis by forming a ternary complex with GTP and initiator tRNA. This is Translation initiation factor 2 subunit beta from Pyrobaculum arsenaticum (strain DSM 13514 / JCM 11321 / PZ6).